We begin with the raw amino-acid sequence, 103 residues long: Pyrimidine/purine nucleoside phosphorylase (103 aa).

The protein belongs to the nucleoside phosphorylase PpnP family.

It catalyses the reaction a purine D-ribonucleoside + phosphate = a purine nucleobase + alpha-D-ribose 1-phosphate. It carries out the reaction adenosine + phosphate = alpha-D-ribose 1-phosphate + adenine. The enzyme catalyses cytidine + phosphate = cytosine + alpha-D-ribose 1-phosphate. The catalysed reaction is guanosine + phosphate = alpha-D-ribose 1-phosphate + guanine. It catalyses the reaction inosine + phosphate = alpha-D-ribose 1-phosphate + hypoxanthine. It carries out the reaction thymidine + phosphate = 2-deoxy-alpha-D-ribose 1-phosphate + thymine. The enzyme catalyses uridine + phosphate = alpha-D-ribose 1-phosphate + uracil. The catalysed reaction is xanthosine + phosphate = alpha-D-ribose 1-phosphate + xanthine. Catalyzes the phosphorolysis of diverse nucleosides, yielding D-ribose 1-phosphate and the respective free bases. Can use uridine, adenosine, guanosine, cytidine, thymidine, inosine and xanthosine as substrates. Also catalyzes the reverse reactions. The polypeptide is Pyrimidine/purine nucleoside phosphorylase (Cupriavidus metallidurans (strain ATCC 43123 / DSM 2839 / NBRC 102507 / CH34) (Ralstonia metallidurans)).